Here is a 940-residue protein sequence, read N- to C-terminus: MSDYKFTLNLPETEFPMRGNLANREPEMLERWTKDGLYQQIRDSRIGRTPFILHDGPPYANGSIHIGHSVNKILKDIIVKSKTMSGFDAPYVPGWDCHGLPIELKVEQKVGKPGQKISAAEFREECRKYAAEQVDGQREDFIRLGVLGDWQNPYLTMDFATEANIVRSLSKVIENGHLHKGVKPVHWCTDCGSALAEAEVEYEDKTSPAIDVAFTAVDSKAVAVKFGVSDYSHSVSMVIWTTTPWTLPANRALSISPELDYSLVEFVKDGVTHAVILADVLVEACMTRYGAESHSVLAKIKGAALELVRFKHPFLAFDVPAILGDHVTTDAGTGVVHTAPGHGQDDFVVGQKYGLEVANPVGDNGVYKPDTEFFAGQHVFKANDNVVALLKEKGALLHHVAYRHSYPHCWRHKTPIIFRATPQWFISMDNHNLRKQALSEIEQIQWIPDWGQSRIEKMVENRPDWCISRQRTWGVPITLFVHRETEELHPDSVSLMARVANRIEQEGIQAWWDLDAAELLGEEAEQYRKVTDTLDVWYDSGSTFASVVAARPEFHGHGVDLYLEGSDQHRGWFMSSLMISTAMTGKAPYKQVLTHGFTVDGKGRKMSKSIGNVIAPQQVTNKLGADILRLWVAATDYSGEMTVSDEILNRSADAYRRIRNTARFLLANLNGFDPKNDLVAVEDMVALDRWAVRRAAALQQEIIEAYEQYNFHIVTQKLMQFCSIELGSFYLDIIKDRQYTAKQEGHARRSCQSALFHIAEAMVRWIAPVLSFTADEVWQLLPGQRDAYVFTQEWYQGLQSITLDTDLSDAYWENLLTVRNEVNKVIEQARRDKRVGGSLEAEVTLFADATLTEQLTHIGDELRFVLLTSEAKVLPLVDATSDAVETELASLKLVVNATTAEKCERCWHHREEVGTIEAHPTLCHRCVTNIEGDGEVRLFA.

Residues 58–68 (PYANGSIHIGH) carry the 'HIGH' region motif. Glu564 serves as a coordination point for L-isoleucyl-5'-AMP. A 'KMSKS' region motif is present at residues 605–609 (KMSKS). Lys608 lines the ATP pocket. Residues Cys903, Cys906, Cys923, and Cys926 each coordinate Zn(2+).

The protein belongs to the class-I aminoacyl-tRNA synthetase family. IleS type 1 subfamily. In terms of assembly, monomer. Requires Zn(2+) as cofactor.

Its subcellular location is the cytoplasm. The catalysed reaction is tRNA(Ile) + L-isoleucine + ATP = L-isoleucyl-tRNA(Ile) + AMP + diphosphate. In terms of biological role, catalyzes the attachment of isoleucine to tRNA(Ile). As IleRS can inadvertently accommodate and process structurally similar amino acids such as valine, to avoid such errors it has two additional distinct tRNA(Ile)-dependent editing activities. One activity is designated as 'pretransfer' editing and involves the hydrolysis of activated Val-AMP. The other activity is designated 'posttransfer' editing and involves deacylation of mischarged Val-tRNA(Ile). This chain is Isoleucine--tRNA ligase, found in Shewanella oneidensis (strain ATCC 700550 / JCM 31522 / CIP 106686 / LMG 19005 / NCIMB 14063 / MR-1).